Here is a 149-residue protein sequence, read N- to C-terminus: Large ribosomal subunit protein uL15 (149 aa).

A disordered region spans residues 1-58; sequence MKLHNLRPAKGGEVKARKRVGRGYGSGLGHNAGRGRDGQNSRSGGGVRPGFEGGQMPL. Composition is skewed to gly residues over residues 22–32 and 43–53; these read RGYGSGLGHNA and SGGGVRPGFEG.

This sequence belongs to the universal ribosomal protein uL15 family. As to quaternary structure, part of the 50S ribosomal subunit.

Functionally, binds to the 23S rRNA. This is Large ribosomal subunit protein uL15 from Finegoldia magna (strain ATCC 29328 / DSM 20472 / WAL 2508) (Peptostreptococcus magnus).